The primary structure comprises 195 residues: Holliday junction branch migration complex subunit RuvA (195 aa).

Residues 1-63 (MIASVRGEVI…EDSMTLYGFV (63 aa)) form a domain I region. Residues 64–142 (DGDARDLFLT…PVSAGGGAAV (79 aa)) are domain II. A flexible linker region spans residues 143–150 (GGHAIRGP). The interval 150–195 (PVVEALVGLGFAAKQAEEATDKVLANDPEATTSSALRAALSMLGKK) is domain III.

Belongs to the RuvA family. As to quaternary structure, homotetramer. Forms an RuvA(8)-RuvB(12)-Holliday junction (HJ) complex. HJ DNA is sandwiched between 2 RuvA tetramers; dsDNA enters through RuvA and exits via RuvB. An RuvB hexamer assembles on each DNA strand where it exits the tetramer. Each RuvB hexamer is contacted by two RuvA subunits (via domain III) on 2 adjacent RuvB subunits; this complex drives branch migration. In the full resolvosome a probable DNA-RuvA(4)-RuvB(12)-RuvC(2) complex forms which resolves the HJ.

The protein localises to the cytoplasm. Its function is as follows. The RuvA-RuvB-RuvC complex processes Holliday junction (HJ) DNA during genetic recombination and DNA repair, while the RuvA-RuvB complex plays an important role in the rescue of blocked DNA replication forks via replication fork reversal (RFR). RuvA specifically binds to HJ cruciform DNA, conferring on it an open structure. The RuvB hexamer acts as an ATP-dependent pump, pulling dsDNA into and through the RuvAB complex. HJ branch migration allows RuvC to scan DNA until it finds its consensus sequence, where it cleaves and resolves the cruciform DNA. The chain is Holliday junction branch migration complex subunit RuvA from Mycolicibacterium smegmatis (strain ATCC 700084 / mc(2)155) (Mycobacterium smegmatis).